Reading from the N-terminus, the 556-residue chain is Arginine--tRNA ligase (556 aa).

Positions 133 to 143 (ANPTGPIHIGH) match the 'HIGH' region motif.

This sequence belongs to the class-I aminoacyl-tRNA synthetase family. Monomer.

The protein resides in the cytoplasm. It catalyses the reaction tRNA(Arg) + L-arginine + ATP = L-arginyl-tRNA(Arg) + AMP + diphosphate. This chain is Arginine--tRNA ligase, found in Dehalococcoides mccartyi (strain CBDB1).